The chain runs to 213 residues: Chloramphenicol acetyltransferase 2 (213 aa).

His-189 serves as the catalytic Proton acceptor.

The protein belongs to the chloramphenicol acetyltransferase family. As to quaternary structure, homotrimer.

The catalysed reaction is chloramphenicol + acetyl-CoA = chloramphenicol 3-acetate + CoA. Its function is as follows. This enzyme is an effector of chloramphenicol resistance in bacteria. The protein is Chloramphenicol acetyltransferase 2 (cmlA) of Escherichia coli.